Reading from the N-terminus, the 141-residue chain is Small ribosomal subunit protein bS16 (141 aa).

Residues 84–141 are disordered; the sequence is TRKARSNPEKSKPKAKAQERLEAARMAEEEAAAAAKAAAEAPAEEAPAAEAPAEEAQA. Over residues 89 to 111 the composition is skewed to basic and acidic residues; the sequence is SNPEKSKPKAKAQERLEAARMAE. Residues 115-141 are compositionally biased toward low complexity; it reads AAAAKAAAEAPAEEAPAAEAPAEEAQA.

This sequence belongs to the bacterial ribosomal protein bS16 family.

The chain is Small ribosomal subunit protein bS16 from Parvibaculum lavamentivorans (strain DS-1 / DSM 13023 / NCIMB 13966).